The chain runs to 456 residues: MGCGAGGSCTPRPPIRQQQAPETRVVAVVFLGLLLDLLAFTLLLPLLPGLLESHGRAHDPLYGSWQRGVDWFAAAIGMPAEKRYNSVLFGGLIGSVFSLLQFLSAPLTGALSDCLGRRPGMLLSLAGVATSYAVWAASKSFAAFLASRVIGGISKGNVSLCTAIVADLGSPSARSKGMAVIGVAFSLGFTLGPTLGAFLPSETVPWLALLFAVSDLLFIWCFLPETLPPEKRAPSVTLGFRAAADLLSPLALLRFSAVARGPDPPTGVRLGSLRGLGLVYFLYLFLFSGLEFTLSFLVHQRFRFSRVEQGKMFFFIGLTMATIQGAYARRIRPGREIAAVKQAILLLIPASLFVGWGHTLPILGLGLLLYSWAAAVVVPCLSSVVAGYGSPGQKGTVMGTLRSLGALARAVGPVVAASAYWLAGARVCYTVCAALFLLPFSILRTLSPPARTLKAE.

Helical transmembrane passes span 25–45 (VVAV…LLLP), 87–107 (VLFG…SAPL), 125–145 (LAGV…AAFL), 149–169 (VIGG…ADLG), 179–199 (AVIG…GAFL), 204–224 (VPWL…CFLP), 278–298 (LVYF…SFLV), 311–328 (KMFF…GAYA), 343–363 (AILL…LPIL), 365–385 (LGLL…SSVV), and 422–442 (LAGA…PFSI).

It belongs to the major facilitator superfamily.

Its subcellular location is the nucleus inner membrane. The protein localises to the cell membrane. Functionally, probable organic anion transporter which may serve as a transporter for some non-steroidal anti-inflammatory drugs (NSAIDs) as well as other organic anions across the luminal membranes of renal proximal tubules at the final excretion step into the urine. The protein is Major facilitator superfamily domain-containing protein 10 (MFSD10) of Bos taurus (Bovine).